A 1003-amino-acid chain; its full sequence is Glycine--tRNA ligase (1003 aa).

The tract at residues 1–310 is glycine--tRNA ligase alpha subunit; it reads MSSQPLTLQA…VTPKKIPTIC (310 aa). A glycine--tRNA ligase beta subunit region spans residues 311–1003; it reads QPEDFLLEIG…CFGFYAWDVL (693 aa).

The protein belongs to the class-II aminoacyl-tRNA synthetase family.

The protein resides in the cytoplasm. It catalyses the reaction tRNA(Gly) + glycine + ATP = glycyl-tRNA(Gly) + AMP + diphosphate. The sequence is that of Glycine--tRNA ligase (glyQS) from Chlamydia trachomatis serovar L2 (strain ATCC VR-902B / DSM 19102 / 434/Bu).